The primary structure comprises 82 residues: Alpha-defensin 17 (82 aa).

The first 8 residues, 1–8 (LLAFQVQA), serve as a signal peptide directing secretion. Positions 1-43 (LLAFQVQADPIQNTDEETKTEEQPGEEDQAVSVSFGDPEGTSL) are disordered. Residues 9 to 47 (DPIQNTDEETKTEEQPGEEDQAVSVSFGDPEGTSLQEES) constitute a propeptide that is removed on maturation. Disulfide bonds link C53–C81, C55–C70, and C60–C80.

It belongs to the alpha-defensin family.

Its subcellular location is the secreted. Its function is as follows. Probably contributes to the antimicrobial barrier function of the small bowel mucosa. The polypeptide is Alpha-defensin 17 (Defa17) (Mus musculus (Mouse)).